The sequence spans 327 residues: Malate dehydrogenase (327 aa).

12-18 (GAAGQIG) contacts NAD(+). 2 residues coordinate substrate: arginine 93 and arginine 99. Residues asparagine 106, glutamine 113, and 130-132 (VGN) each bind NAD(+). Substrate-binding residues include asparagine 132 and arginine 163. The active-site Proton acceptor is histidine 188.

The protein belongs to the LDH/MDH superfamily. MDH type 2 family.

The catalysed reaction is (S)-malate + NAD(+) = oxaloacetate + NADH + H(+). Catalyzes the reversible oxidation of malate to oxaloacetate. This Cupriavidus metallidurans (strain ATCC 43123 / DSM 2839 / NBRC 102507 / CH34) (Ralstonia metallidurans) protein is Malate dehydrogenase.